Here is a 186-residue protein sequence, read N- to C-terminus: Transposons Tn1721 resolvase (186 aa).

Residues histidine 4–glycine 137 enclose the Resolvase/invertase-type recombinase catalytic domain. Serine 12 acts as the O-(5'-phospho-DNA)-serine intermediate in catalysis. Positions lysine 164–arginine 183 form a DNA-binding region, H-T-H motif.

It belongs to the site-specific recombinase resolvase family.

In terms of biological role, resolvase catalyzes the resolution (a site-specific recombination) of the cointegrated replicon to yield the final transposition products. This is Transposons Tn1721 resolvase (tnpR) from Escherichia coli.